We begin with the raw amino-acid sequence, 226 residues long: Ribonuclease 3 (226 aa).

The RNase III domain maps to 6–128 (INRLQRKLGY…LIGGVFLDSN (123 aa)). Glutamate 41 contacts Mg(2+). Aspartate 45 is an active-site residue. Residues aspartate 114 and glutamate 117 each coordinate Mg(2+). Residue glutamate 117 is part of the active site. The region spanning 155 to 225 (DPKTRLQEYL…AEQVLKKLEL (71 aa)) is the DRBM domain.

Belongs to the ribonuclease III family. Homodimer. The cofactor is Mg(2+).

It is found in the cytoplasm. It carries out the reaction Endonucleolytic cleavage to 5'-phosphomonoester.. Functionally, digests double-stranded RNA. Involved in the processing of primary rRNA transcript to yield the immediate precursors to the large and small rRNAs (23S and 16S). Processes some mRNAs, and tRNAs when they are encoded in the rRNA operon. Processes pre-crRNA and tracrRNA of type II CRISPR loci if present in the organism. The sequence is that of Ribonuclease 3 from Salmonella choleraesuis (strain SC-B67).